A 442-amino-acid chain; its full sequence is Putative amino acid transporter YuiF (442 aa).

Transmembrane regions (helical) follow at residues 21–41, 51–71, 103–123, 146–166, 190–210, 236–256, 259–279, 292–312, 335–355, 364–384, and 421–441; these read IVIALIIGALAGGLTGGLGLG, LGGNATVAVSYAMLGAFAAAL, LIVLIILIVSCFSQNVVPVHI, LIACVITFGLTAPYILLPVGF, IPYALIIPVAGMVVGLILSVI, IGIAVLAIVVSLGVQLYLSQT, VEGMIMGALAGLIVLFVSGVM, MVLMAFIGFVMLVAAGFSNVL, LGALLMLIVGLLITMGIGSSF, IFVPLCMQLGFSPMATIAIIG, and VPTFIFYNIPLVIFGWIAALV.

It is found in the cell membrane. This is Putative amino acid transporter YuiF (yuiF) from Bacillus subtilis (strain 168).